The primary structure comprises 338 residues: 1-aminocyclopropane-1-carboxylate deaminase (338 aa).

K51 carries the N6-(pyridoxal phosphate)lysine modification. Catalysis depends on S78, which acts as the Nucleophile.

It belongs to the ACC deaminase/D-cysteine desulfhydrase family. As to quaternary structure, homotrimer. It depends on pyridoxal 5'-phosphate as a cofactor.

The catalysed reaction is 1-aminocyclopropane-1-carboxylate + H2O = 2-oxobutanoate + NH4(+). Its function is as follows. Catalyzes a cyclopropane ring-opening reaction, the irreversible conversion of 1-aminocyclopropane-1-carboxylate (ACC) to ammonia and alpha-ketobutyrate. Allows growth on ACC as a nitrogen source. The polypeptide is 1-aminocyclopropane-1-carboxylate deaminase (Burkholderia ambifaria (strain MC40-6)).